A 302-amino-acid chain; its full sequence is Probable lipid kinase YegS-like (302 aa).

A DAGKc domain is found at 1–129 (MDKDKVLLVL…IDLGEVNGKL (129 aa)). Residues Thr39, 65–71 (GDGTLRE), and Thr92 each bind ATP. Mg(2+) is bound by residues Arg210, Asp213, and Leu215. Glu268 functions as the Proton acceptor in the catalytic mechanism.

It belongs to the diacylglycerol/lipid kinase family. YegS lipid kinase subfamily. Requires Mg(2+) as cofactor. The cofactor is Ca(2+).

It is found in the cytoplasm. Its function is as follows. Probably phosphorylates lipids; the in vivo substrate is unknown. This is Probable lipid kinase YegS-like from Pseudomonas aeruginosa (strain ATCC 15692 / DSM 22644 / CIP 104116 / JCM 14847 / LMG 12228 / 1C / PRS 101 / PAO1).